A 168-amino-acid chain; its full sequence is SPbeta prophage-derived uncharacterized protein YomW (168 aa).

The sequence is that of SPbeta prophage-derived uncharacterized protein YomW (yomW) from Bacillus subtilis (strain 168).